The following is a 265-amino-acid chain: R-spondin-1 (265 aa).

An N-terminal signal peptide occupies residues 1–20 (MRLGLCVVALVLSWTHIAVG). FU repeat units lie at residues 34-85 (AEGS…GYFD) and 91-135 (MNKC…GSTA). Intrachain disulfides connect C40/C47, C44/C53, C56/C75, C79/C94, C97/C105, C102/C111, C114/C125, C129/C142, C148/C190, C159/C166, and C199/C206. N137 is a glycosylation site (N-linked (GlcNAc...) asparagine). The 61-residue stretch at 147 to 207 (QCEMSEWSPW…KCTVRRTPCP (61 aa)) folds into the TSP type-1 domain. Residue W153 is glycosylated (C-linked (Man) tryptophan). The C-linked (Man) tryptophan; by DPY19L3 glycan is linked to W156. 2 disordered regions span residues 173 to 192 (EERT…TCSD) and 201 to 265 (VRRT…TWAQ). Positions 245 to 257 (QQQPQPGTTGPLT) are enriched in low complexity.

This sequence belongs to the R-spondin family. In terms of assembly, interacts with ZNRF3; promoting indirect interaction between ZNRF3 and LGR4 and membrane clearance of ZNRF3. Identified in a complex composed of RNF43, LGR5 and RSPO1. Interacts with the extracellular domain of FZD8 and LRP6. It however does not form a ternary complex with FZD8 and LRP6. Interacts with WNT1. Binds heparin. Interacts with LGR4, LGR5 and LGR6. Interacts (via FU repeats) with KREM1. In terms of processing, C-, and N-glycosylated. N-glycosylation at Asn-137, negatively influences its secretion and enhancing effect on Wnt/beta-catenin signaling. C-mannosylation at Trp-156 by DPY19L3 is required for its secretion an regulates the enhancing activity of Wnt signaling. As to expression, expressed in the dorsal part of the neural tube on 10 and 12 dpc, especially in the boundary region between roof plate and neuroepithelium. This expression is enhanced in the rostral part. Also expressed in other tissues such as truncal region neighboring forelimbs and mesenchymal tissues around the nasal cavity.

Its subcellular location is the secreted. It localises to the nucleus. Its function is as follows. Activator of the canonical Wnt signaling pathway by acting as a ligand for LGR4-6 receptors. Upon binding to LGR4-6 (LGR4, LGR5 or LGR6), LGR4-6 associate with phosphorylated LRP6 and frizzled receptors that are activated by extracellular Wnt receptors, triggering the canonical Wnt signaling pathway to increase expression of target genes. Also regulates the canonical Wnt/beta-catenin-dependent pathway and non-canonical Wnt signaling by acting as an inhibitor of ZNRF3, an important regulator of the Wnt signaling pathway. Acts as a ligand for frizzled FZD8 and LRP6. May negatively regulate the TGF-beta pathway. Has a essential roles in ovary determination. Regulates Wnt signaling by antagonizing DKK1/KREM1-mediated internalization of LRP6 through an interaction with KREM1. The polypeptide is R-spondin-1 (Rspo1) (Mus musculus (Mouse)).